The sequence spans 398 residues: Succinate--CoA ligase [ADP-forming] subunit beta (398 aa).

In terms of domain architecture, ATP-grasp spans 9-254; sequence KRLLHTYGAP…LTEEDPKEIE (246 aa). Residues lysine 46, 53–55, glutamate 109, alanine 112, and glutamate 117 each bind ATP; that span reads GRG. The Mg(2+) site is built by asparagine 209 and aspartate 223. Substrate contacts are provided by residues asparagine 274 and 331-333; that span reads GIM.

This sequence belongs to the succinate/malate CoA ligase beta subunit family. In terms of assembly, heterotetramer of two alpha and two beta subunits. The cofactor is Mg(2+).

It catalyses the reaction succinate + ATP + CoA = succinyl-CoA + ADP + phosphate. It carries out the reaction GTP + succinate + CoA = succinyl-CoA + GDP + phosphate. It functions in the pathway carbohydrate metabolism; tricarboxylic acid cycle; succinate from succinyl-CoA (ligase route): step 1/1. In terms of biological role, succinyl-CoA synthetase functions in the citric acid cycle (TCA), coupling the hydrolysis of succinyl-CoA to the synthesis of either ATP or GTP and thus represents the only step of substrate-level phosphorylation in the TCA. The beta subunit provides nucleotide specificity of the enzyme and binds the substrate succinate, while the binding sites for coenzyme A and phosphate are found in the alpha subunit. This chain is Succinate--CoA ligase [ADP-forming] subunit beta, found in Brucella abortus (strain S19).